The following is a 241-amino-acid chain: MGLRSFVIPAVDIKDGKAVRLYKGDPEAVTVYGDDPVSVAKQWEEKGAKHLHIVDLDGAFEGKPKNIDIVKDIVKTVSIPVEFGGGLRSFEAVKSIVETGVERVVIGSLAYQNRQEFERIVSAYPGKVIVGIDAKDGKVAIKGWLEKTEYTPLDFARMFDDLDIWGFLYTDVNRDGAMVGPNIEGTKYLAQNLKHPVIASGGVGSVEDLKKLYDLKKYGVYGVVVGKALYEGKIKLEQLED.

The active-site Proton acceptor is Asp-12. The Proton donor role is filled by Asp-133.

This sequence belongs to the HisA/HisF family.

The protein localises to the cytoplasm. It catalyses the reaction 1-(5-phospho-beta-D-ribosyl)-5-[(5-phospho-beta-D-ribosylamino)methylideneamino]imidazole-4-carboxamide = 5-[(5-phospho-1-deoxy-D-ribulos-1-ylimino)methylamino]-1-(5-phospho-beta-D-ribosyl)imidazole-4-carboxamide. The protein operates within amino-acid biosynthesis; L-histidine biosynthesis; L-histidine from 5-phospho-alpha-D-ribose 1-diphosphate: step 4/9. The protein is 1-(5-phosphoribosyl)-5-[(5-phosphoribosylamino)methylideneamino] imidazole-4-carboxamide isomerase of Persephonella marina (strain DSM 14350 / EX-H1).